We begin with the raw amino-acid sequence, 709 residues long: MQVFSMEIAGRTLTIETGRVAKQAGGSVLARYGDTVVLVTATGSKEPRPGIDFFPLTVDYEERLYAVGKIPGGFIKREGRPTEKAILSARLIDRPIRPLFPKGFRNDVQVVATVMSVDQDCPPDIVGMIGASCALSLSDIPFEGPIGGVLVGRVDGKLLINPTMEQAEKSDMHLVVAGTKDAVMMVEAGANEVPEEDMIEAIMFGHQEIQRIVAFQEEMVAVAGKPKREVPLKQINPELEQAVREYVGDKLRNAIQNPDKLSREADIQAVMKETVEALLPHFPEEEKDIRTVLDTMEKEIVRKLITVDKQRPDGRKMDEIRPISVEVGILPRTHGSGLFTRGQTQVLNVCTLGTIADLQILDGLGVEESKRYMHHYNFPPYSVGETRPMRGPGRREIGHGALAERALLPVIPSEDEFPYTIRLVSEAVESNGSTSMASVCGSTLSLMNAGVPIKKPVAGIAMGLIKEGEHFSILSDIQGMEDHLGDMDFKVAGTADGVTALQMDIKIKGVNREILTQALQQARKGRLFILDKMLAVIDKPAAEMSPYAPRIITMSIDPDKIREVIGPGGKVINKIIAETGVKIDIEDDGRIFIAATDTEAANKAVRIIESITADVEVGKVYTGKVTRIMNFGAFVEVLPGKEGLIHISQLAEERVAKVEDVVKIGDEVTVKVVEIDKQGRINLSRKEVLKANKPAVTGGARPDEMRRRF.

Mg(2+)-binding residues include aspartate 482 and aspartate 488. Positions 549-608 constitute a KH domain; the sequence is PRIITMSIDPDKIREVIGPGGKVINKIIAETGVKIDIEDDGRIFIAATDTEAANKAVRII. The region spanning 618-686 is the S1 motif domain; that stretch reads GKVYTGKVTR…KQGRINLSRK (69 aa).

It belongs to the polyribonucleotide nucleotidyltransferase family. The cofactor is Mg(2+).

It is found in the cytoplasm. It catalyses the reaction RNA(n+1) + phosphate = RNA(n) + a ribonucleoside 5'-diphosphate. Functionally, involved in mRNA degradation. Catalyzes the phosphorolysis of single-stranded polyribonucleotides processively in the 3'- to 5'-direction. This Heliobacterium modesticaldum (strain ATCC 51547 / Ice1) protein is Polyribonucleotide nucleotidyltransferase.